The chain runs to 364 residues: Probable methyltransferase ICS2 (364 aa).

Residues tyrosine 18, cysteine 61, aspartate 98, leucine 99, serine 133, and phenylalanine 134 each coordinate S-adenosyl-L-homocysteine. Residues asparagine 172, aspartate 258, phenylalanine 260, and asparagine 261 each coordinate Mg(2+).

This sequence belongs to the methyltransferase superfamily. Type-7 methyltransferase family. Requires Mg(2+) as cofactor.

Functionally, no detectable N-methyltransferase activity. The sequence is that of Probable methyltransferase ICS2 from Camellia irrawadiensis (Burmese tea).